Here is a 735-residue protein sequence, read N- to C-terminus: Stonin-1 (735 aa).

Residues methionine 1–cysteine 35 are disordered. The 134-residue stretch at glycine 275–lysine 408 folds into the SHD domain. In terms of domain architecture, MHD spans glutamate 412–glutamate 715.

Belongs to the Stoned B family. Ubiquitous.

The protein resides in the cytoplasm. It is found in the membrane. May be involved in the endocytic machinery. This is Stonin-1 (STON1) from Homo sapiens (Human).